Consider the following 342-residue polypeptide: MTKSLFRQSFLTDTLDVHIDVAPAEQVLSNGVQLKLYQRGVLEVIPENPTQETKNIIISCGIHGDETAPMELVDSIIKDIESGFQKVDARCLFIIAHPESTLAHTRFLEENLNRLFDEKEHEPTKELAIADTLKLLVRDFYQDTEPKTRWHLDLHCAIRGSKHYTFAVSPKTRHPVRSKALVDFLDSAHIEAVLLSNSPSSTFSWYSAENYSAQALTMELGRVARIGENALDRLTAFDLALRNLIAEAQPEHLSKPCIKYRVSRTIVRLHDDFDFMFDDNVENFTSFVHGEVFGHDGDKPLMAKNDNEAIVFPNRHVAIGQRAALMVCEVKTRFEEGELVYD.

His63, Glu66, and His155 together coordinate Zn(2+). The active site involves Glu219.

The protein belongs to the AspA/AstE family. Succinylglutamate desuccinylase subfamily. Zn(2+) serves as cofactor.

The enzyme catalyses N-succinyl-L-glutamate + H2O = L-glutamate + succinate. It functions in the pathway amino-acid degradation; L-arginine degradation via AST pathway; L-glutamate and succinate from L-arginine: step 5/5. In terms of biological role, transforms N(2)-succinylglutamate into succinate and glutamate. In Vibrio parahaemolyticus serotype O3:K6 (strain RIMD 2210633), this protein is Succinylglutamate desuccinylase.